The following is a 494-amino-acid chain: Cytochrome P450 2A6 (494 aa).

Positions 107 and 297 each coordinate substrate. Residue Cys-439 coordinates heme.

It belongs to the cytochrome P450 family. Heme is required as a cofactor. Liver.

It localises to the endoplasmic reticulum membrane. It is found in the microsome membrane. It carries out the reaction 1,4-cineole + reduced [NADPH--hemoprotein reductase] + O2 = 2-exo-hydroxy-1,4-cineole + oxidized [NADPH--hemoprotein reductase] + H2O + H(+). Its function is as follows. Exhibits a high coumarin 7-hydroxylase activity. Can act in the hydroxylation of the anti-cancer drugs cyclophosphamide and ifosphamide. Competent in the metabolic activation of aflatoxin B1. Constitutes the major nicotine C-oxidase. Acts as a 1,4-cineole 2-exo-monooxygenase. Possesses low phenacetin O-deethylation activity. In Homo sapiens (Human), this protein is Cytochrome P450 2A6 (CYP2A6).